A 341-amino-acid polypeptide reads, in one-letter code: BZIP domain-containing transcription factor BZP4 (341 aa).

Composition is skewed to polar residues over residues 1-32, 61-76, 128-139, and 150-163; these read MESS…PTNE, LTES…SHSL, PLTSHSRSQITH, and YSSS…SPVS. Disordered stretches follow at residues 1-95 and 118-254; these read MESS…PHGM and TNHS…DKKQ. Residues 178-192 are compositionally biased toward low complexity; the sequence is SPSSSSFPSSIPRTP. 2 stretches are compositionally biased toward basic and acidic residues: residues 225–234 and 242–254; these read TGDRKHEKDS and EEYK…DKKQ. The segment at 250–269 is basic motif; the sequence is KDKKQVRNRIGARRFRAKRK. One can recognise a bZIP domain in the interval 250-308; sequence KDKKQVRNRIGARRFRAKRKDYVNQLEAGIRLRDDEITNLQSQLESQRNEINELRLQLK. Positions 279–307 are leucine-zipper; the sequence is IRLRDDEITNLQSQLESQRNEINELRLQL.

It belongs to the bZIP family.

The protein resides in the nucleus. It localises to the cytoplasm. Its function is as follows. Transcription factor that promotes the production of melanin, a pigment that serves as antioxidant, reactive oxygen species (ROS) scavenger and that protect fungal pathogens from radiation and host immune responses. The polypeptide is BZIP domain-containing transcription factor BZP4 (Cryptococcus neoformans var. grubii serotype A (strain H99 / ATCC 208821 / CBS 10515 / FGSC 9487) (Filobasidiella neoformans var. grubii)).